A 632-amino-acid chain; its full sequence is Chaperone protein HtpG (632 aa).

The interval 1–339 (MTQQTMSFQA…SSDLPLNVSR (339 aa)) is a; substrate-binding. Residues 340–559 (EILQESRDVK…DNDMSGYLQR (220 aa)) are b. Positions 560 to 632 (MLKAAGQSAP…TNALLLSRAA (73 aa)) are c.

This sequence belongs to the heat shock protein 90 family. In terms of assembly, homodimer.

The protein resides in the cytoplasm. Its function is as follows. Molecular chaperone. Has ATPase activity. The protein is Chaperone protein HtpG of Burkholderia mallei (strain NCTC 10247).